A 305-amino-acid chain; its full sequence is Acetyl-coenzyme A carboxylase carboxyl transferase subunit beta (305 aa).

Positions 27 to 296 (LWVKCSSCRE…SPAKAELAGR (270 aa)) constitute a CoA carboxyltransferase N-terminal domain. Positions 31, 34, 50, and 53 each coordinate Zn(2+). A C4-type zinc finger spans residues 31-53 (CSSCRELIYKKQLNDNLKVCPKC).

The protein belongs to the AccD/PCCB family. In terms of assembly, acetyl-CoA carboxylase is a heterohexamer composed of biotin carboxyl carrier protein (AccB), biotin carboxylase (AccC) and two subunits each of ACCase subunit alpha (AccA) and ACCase subunit beta (AccD). The cofactor is Zn(2+).

The protein resides in the cytoplasm. It catalyses the reaction N(6)-carboxybiotinyl-L-lysyl-[protein] + acetyl-CoA = N(6)-biotinyl-L-lysyl-[protein] + malonyl-CoA. It functions in the pathway lipid metabolism; malonyl-CoA biosynthesis; malonyl-CoA from acetyl-CoA: step 1/1. Component of the acetyl coenzyme A carboxylase (ACC) complex. Biotin carboxylase (BC) catalyzes the carboxylation of biotin on its carrier protein (BCCP) and then the CO(2) group is transferred by the transcarboxylase to acetyl-CoA to form malonyl-CoA. This chain is Acetyl-coenzyme A carboxylase carboxyl transferase subunit beta, found in Chloroflexus aurantiacus (strain ATCC 29366 / DSM 635 / J-10-fl).